Here is a 342-residue protein sequence, read N- to C-terminus: Putative anthocyanidin reductase (342 aa).

NADP(+) is bound by residues Arg44, Lys51, 71–72 (EL), 91–93 (VAT), Tyr172, Lys176, 199–202 (PVLV), and Ser214. Lys176 serves as the catalytic Proton donor.

This sequence belongs to the NAD(P)-dependent epimerase/dehydratase family. Dihydroflavonol-4-reductase subfamily. Highly expressed in leaves and weakly in stems. Not expressed in roots.

It participates in secondary metabolite biosynthesis; flavonoid biosynthesis. This chain is Putative anthocyanidin reductase, found in Ginkgo biloba (Ginkgo).